The primary structure comprises 375 residues: MQKLAVYVYIYLFMQILVHPVALDGSSQPTENAEKDGLCNACTWRQNTKSSRIEAIKIQILSKLRLEQAPNISRDVIKQLLPKAPPLQELIDQYDVQRDDSSDGSLEDDDYHATTETIITMPTESDFLVQMEGKPKCCFFKFSSKIQYNKVVKAQLWIYLRQVQKPTTVFVQILRLIKPMKDGTRYTGIRSLKLDMNPGTGIWQSIDVKTVLQNWLKQPESNLGIEIKAFDENGRDLAVTFPGPGEDGLNPFLEVRVTDTPKRSRRDFGLDCDEHSTESRCCRYPLTVDFEAFGWDWIIAPKRYKANYCSGECEFVFLQKYPHTHLVHQANPRGSAGPCCTPTKMSPINMLYFNGKEQIIYGKIPAMVVDRCGCS.

An N-terminal signal peptide occupies residues 1 to 23 (MQKLAVYVYIYLFMQILVHPVAL). The propeptide occupies 24–266 (DGSSQPTENA…VTDTPKRSRR (243 aa)). A glycan (N-linked (GlcNAc...) asparagine) is linked at Asn-71. Cystine bridges form between Cys-272–Cys-282, Cys-281–Cys-340, Cys-309–Cys-372, and Cys-313–Cys-374.

It belongs to the TGF-beta family. Homodimer; disulfide-linked.

Its subcellular location is the secreted. In terms of biological role, acts specifically as a negative regulator of skeletal muscle growth. The sequence is that of Growth/differentiation factor 8 (MSTN) from Meleagris gallopavo (Wild turkey).